We begin with the raw amino-acid sequence, 766 residues long: Phospholipid phosphatase-related protein type 4 (766 aa).

S37 carries the phosphoserine modification. The next 3 membrane-spanning stretches (helical) occupy residues 68–88 (LPCF…SLYF), 120–140 (AIPF…TIMV), and 179–199 (FVGV…IIQL). N215 and N220 each carry an N-linked (GlcNAc...) asparagine glycan. A helical transmembrane segment spans residues 248–268 (SFPSQHATLAAFAAVYVSMYF). The N-linked (GlcNAc...) asparagine glycan is linked to N269. The next 2 helical transmembrane spans lie at 277 to 297 (KLLK…CGLT) and 309 to 329 (VYCG…YAVG). S347 is modified (phosphoserine). An N-linked (GlcNAc...) asparagine glycan is attached at N363. Residue S386 is modified to Phosphoserine. N433 is a glycosylation site (N-linked (GlcNAc...) asparagine). Phosphoserine is present on S439. Residues 454-494 (SKNESRKMSLQVMDTEPEGQSPPRSIEMRSSSEPSRVGVNG) are disordered. N456 carries an N-linked (GlcNAc...) asparagine glycan. Phosphoserine occurs at positions 462 and 474. Residues N515, N545, and N570 are each glycosylated (N-linked (GlcNAc...) asparagine). S608 is subject to Phosphoserine. Disordered regions lie at residues 634-654 (PIIQ…KWKA), 672-701 (DSES…HHHH), and 742-766 (ERSN…AYKD). Residues 672–697 (DSESCESLKDSFGSGDRKRSNIDSNE) are compositionally biased toward basic and acidic residues. The segment covering 743-752 (RSNSPENTRN) has biased composition (polar residues).

Belongs to the PA-phosphatase related phosphoesterase family. O-glycosylated. Probably at Ser-347. Brain-specific, it is exclusively expressed in neurons (at protein level).

The protein resides in the postsynaptic density membrane. Its function is as follows. Postsynaptic density membrane protein that indirectly regulates glutamatergic synaptic transmission through lysophosphatidic acid (LPA)-mediated signaling pathways. Binds lysophosphatidic acid (LPA) and mediates its internalization into cells. Could act as receptor or a transporter of this lipid at the post-synaptic membrane. Modulates lysophosphatidic acid (LPA) activity in neuron axonal outgrowth during development by attenuating phospholipid-induced axon collapse. This chain is Phospholipid phosphatase-related protein type 4, found in Mus musculus (Mouse).